The following is a 153-amino-acid chain: Cell division protein SepF (153 aa).

This sequence belongs to the SepF family. As to quaternary structure, homodimer. Interacts with FtsZ.

Its subcellular location is the cytoplasm. Cell division protein that is part of the divisome complex and is recruited early to the Z-ring. Probably stimulates Z-ring formation, perhaps through the cross-linking of FtsZ protofilaments. Its function overlaps with FtsA. The protein is Cell division protein SepF of Clostridium novyi (strain NT).